Reading from the N-terminus, the 469-residue chain is 3-isopropylmalate dehydratase large subunit (469 aa).

The [4Fe-4S] cluster site is built by cysteine 349, cysteine 410, and cysteine 413.

The protein belongs to the aconitase/IPM isomerase family. LeuC type 1 subfamily. As to quaternary structure, heterodimer of LeuC and LeuD. [4Fe-4S] cluster is required as a cofactor.

The catalysed reaction is (2R,3S)-3-isopropylmalate = (2S)-2-isopropylmalate. Its pathway is amino-acid biosynthesis; L-leucine biosynthesis; L-leucine from 3-methyl-2-oxobutanoate: step 2/4. In terms of biological role, catalyzes the isomerization between 2-isopropylmalate and 3-isopropylmalate, via the formation of 2-isopropylmaleate. This Neisseria gonorrhoeae (strain NCCP11945) protein is 3-isopropylmalate dehydratase large subunit.